The primary structure comprises 165 residues: 3-hydroxyacyl-[acyl-carrier-protein] dehydratase FERN, mitochondrial (165 aa).

Residues 1-35 (MLMKRLFSSSHVFSSSSASSNLLKIGSVLKQARTF) constitute a mitochondrion transit peptide. Residues 36–124 (ADDDVLGYSK…AVSIRQIKNK (89 aa)) enclose the MaoC-like domain.

In terms of assembly, homodimer.

It localises to the mitochondrion. It carries out the reaction a (3R)-hydroxyacyl-[ACP] = a (2E)-enoyl-[ACP] + H2O. The protein operates within lipid metabolism; fatty acid biosynthesis. In terms of biological role, 3-hydroxyl-[acyl-carrier-protein] (3-hydroxyl-ACP) dehydratase required for mitochondrial fatty acid synthesis (mtFAS). Essential for photorespiration, tomato morphogenesis and plant development, probably by influencing mitochondrial membrane lipid composition and other lipid metabolic pathways, and by contributing to energy supply and reactive oxygen species (ROS) homeostasis. The polypeptide is 3-hydroxyacyl-[acyl-carrier-protein] dehydratase FERN, mitochondrial (Solanum lycopersicum (Tomato)).